A 312-amino-acid chain; its full sequence is Phosphatidate cytidylyltransferase (312 aa).

Residues Met1–Pro31 form a disordered region. 8 helical membrane-spanning segments follow: residues Leu37–Phe57, Ala58–Val78, Gly85–Trp105, Val110–Met130, Ala157–Tyr177, Phe186–Phe206, Gly223–Ala243, and Pro247–Val267.

This sequence belongs to the CDS family.

It localises to the cell membrane. The catalysed reaction is a 1,2-diacyl-sn-glycero-3-phosphate + CTP + H(+) = a CDP-1,2-diacyl-sn-glycerol + diphosphate. Its pathway is phospholipid metabolism; CDP-diacylglycerol biosynthesis; CDP-diacylglycerol from sn-glycerol 3-phosphate: step 3/3. This Mycobacterium leprae (strain TN) protein is Phosphatidate cytidylyltransferase (cdsA).